A 234-amino-acid polypeptide reads, in one-letter code: Synaptogyrin-4 (234 aa).

The region spanning 18–169 (FLKRPKAITR…QAYLAFQELR (152 aa)) is the MARVEL domain. The next 4 membrane-spanning stretches (helical) occupy residues 25–45 (ITRI…LTDG), 66–86 (CSIA…FLAL), 104–124 (LLDL…FCFL), and 145–165 (AAIT…YLAF). The segment at 191-226 (SPPSAASPVNTPTTGPHGPSYASSSLSPYLSTPKAP) is disordered. Low complexity predominate over residues 209–221 (PSYASSSLSPYLS).

The protein belongs to the synaptogyrin family.

The protein localises to the membrane. This is Synaptogyrin-4 (SYNGR4) from Bos taurus (Bovine).